We begin with the raw amino-acid sequence, 878 residues long: DNA mismatch repair protein MutS (878 aa).

629–636 provides a ligand contact to ATP; that stretch reads GPNMAGKS.

It belongs to the DNA mismatch repair MutS family.

In terms of biological role, this protein is involved in the repair of mismatches in DNA. It is possible that it carries out the mismatch recognition step. This protein has a weak ATPase activity. This chain is DNA mismatch repair protein MutS, found in Roseobacter denitrificans (strain ATCC 33942 / OCh 114) (Erythrobacter sp. (strain OCh 114)).